Consider the following 140-residue polypeptide: Nucleoside diphosphate kinase (140 aa).

ATP-binding residues include Lys11, Phe59, Arg87, Thr93, Arg104, and Asn114. His117 acts as the Pros-phosphohistidine intermediate in catalysis.

The protein belongs to the NDK family. Homotetramer. Requires Mg(2+) as cofactor.

It is found in the cytoplasm. The catalysed reaction is a 2'-deoxyribonucleoside 5'-diphosphate + ATP = a 2'-deoxyribonucleoside 5'-triphosphate + ADP. It carries out the reaction a ribonucleoside 5'-diphosphate + ATP = a ribonucleoside 5'-triphosphate + ADP. Functionally, major role in the synthesis of nucleoside triphosphates other than ATP. The ATP gamma phosphate is transferred to the NDP beta phosphate via a ping-pong mechanism, using a phosphorylated active-site intermediate. In Rickettsia peacockii (strain Rustic), this protein is Nucleoside diphosphate kinase.